The sequence spans 150 residues: Transcriptional regulator MraZ (150 aa).

2 SpoVT-AbrB domains span residues 5–51 and 80–123; these read VANL…PQPE and ATEC…DEDT.

Belongs to the MraZ family. As to quaternary structure, forms oligomers.

The protein resides in the cytoplasm. The protein localises to the nucleoid. This chain is Transcriptional regulator MraZ, found in Thioalkalivibrio sulfidiphilus (strain HL-EbGR7).